The following is a 437-amino-acid chain: MTVLRSMKDFSSMNITASILLFVTAIAAAVIANSPAASVYQEFLSHELHFRIGGFNLLSHAGHNLTMIEFINDGLMTIFFLMVGLEIKRELLVGELSSFRKAALPFIAACGGMVVPVVIYSMVCAPGTEGGQGLAIPMATDIAFSLGVLSLLGKRVPLSLKIFLTAFAVVDDIGGILVIAIFYSSHVAYEYLLWAALLYVLLYFIGKKGATNKIFFLVVGVVIWYLFLQSGIHSTISGVILAFVIPAKPQLNVGTYIERIRRIISTFPEMGANNIVLTNQQIAKLKEVESASDRVISPLQSLEDNLHGAVNYLVLPLFAFVNAGVMFSGEGEVIGGVTLAVALGLLAGKFLGIYSFTWLAVKSGLTPMPLGMNWKNISGVALLGGIGFTVSLFIANLSFGSAHPVLLNQAKLGVLSGTVMAGILGYLVLHWVLPQRR.

Helical transmembrane passes span serine 12–alanine 32, leucine 65–leucine 85, alanine 103–valine 123, glycine 133–glycine 153, isoleucine 162–phenylalanine 182, histidine 186–glycine 206, isoleucine 214–serine 234, glycine 308–serine 328, valine 333–isoleucine 353, isoleucine 377–leucine 397, and leucine 412–valine 432.

Belongs to the NhaA Na(+)/H(+) (TC 2.A.33) antiporter family.

Its subcellular location is the cell inner membrane. The catalysed reaction is Na(+)(in) + 2 H(+)(out) = Na(+)(out) + 2 H(+)(in). Its function is as follows. Na(+)/H(+) antiporter that extrudes sodium in exchange for external protons. The sequence is that of Na(+)/H(+) antiporter NhaA from Bacteroides fragilis (strain YCH46).